We begin with the raw amino-acid sequence, 590 residues long: Putative ferric-chelate reductase 1 (590 aa).

Residues 2–22 (NPLGLFLIYLYTCALTPVSGY) form a helical membrane-spanning segment. Residues 12–179 (YTCALTPVSG…APKIPSSTIP (168 aa)) enclose the Reelin domain. Residues 217–330 (ECFFLSFRKD…RSYFIFLADG (114 aa)) form the DOMON domain. Residues 334–533 (DGLLYRHHRQ…VFVDLLLEAH (200 aa)) form the Cytochrome b561 domain. Residues 371–391 (LHGAMMFIAWMTTVSIGVIIA) form a helical membrane-spanning segment. The heme b site is built by His372 and His413. The next 2 membrane-spanning stretches (helical) occupy residues 416 to 436 (LMIT…IYRG) and 445 to 465 (HPHL…LAVF). His445 contributes to the heme b binding site. A glycan (N-linked (GlcNAc...) asparagine) is linked at Asn478. Position 481 (His481) interacts with heme b. The next 3 helical transmembrane spans lie at 482–502 (WATG…GMDL), 517–537 (IGFV…GFCL), and 567–587 (IVMT…LAAI).

It belongs to the FRRS1 family. Heme b serves as cofactor.

It is found in the membrane. In terms of biological role, putative ferric-chelate reductases reduce Fe(3+) to Fe(2+) before its transport from the endosome to the cytoplasm. The chain is Putative ferric-chelate reductase 1 (frrs1) from Xenopus laevis (African clawed frog).